We begin with the raw amino-acid sequence, 119 residues long: Holo-[acyl-carrier-protein] synthase (119 aa).

2 residues coordinate Mg(2+): aspartate 8 and glutamate 50.

Belongs to the P-Pant transferase superfamily. AcpS family. Mg(2+) serves as cofactor.

The protein resides in the cytoplasm. The catalysed reaction is apo-[ACP] + CoA = holo-[ACP] + adenosine 3',5'-bisphosphate + H(+). Transfers the 4'-phosphopantetheine moiety from coenzyme A to a Ser of acyl-carrier-protein. The polypeptide is Holo-[acyl-carrier-protein] synthase (Clavibacter michiganensis subsp. michiganensis (strain NCPPB 382)).